The sequence spans 154 residues: Large ribosomal subunit protein uL13 (154 aa).

The segment at 132–154 (PHEAQQPETLDVGAMNRKNKRAA) is disordered.

It belongs to the universal ribosomal protein uL13 family. Part of the 50S ribosomal subunit.

Functionally, this protein is one of the early assembly proteins of the 50S ribosomal subunit, although it is not seen to bind rRNA by itself. It is important during the early stages of 50S assembly. This chain is Large ribosomal subunit protein uL13, found in Rhodopseudomonas palustris (strain HaA2).